Consider the following 255-residue polypeptide: 5-oxoprolinase subunit A (255 aa).

It belongs to the LamB/PxpA family. In terms of assembly, forms a complex composed of PxpA, PxpB and PxpC.

It catalyses the reaction 5-oxo-L-proline + ATP + 2 H2O = L-glutamate + ADP + phosphate + H(+). Catalyzes the cleavage of 5-oxoproline to form L-glutamate coupled to the hydrolysis of ATP to ADP and inorganic phosphate. This chain is 5-oxoprolinase subunit A, found in Clostridium beijerinckii (strain ATCC 51743 / NCIMB 8052) (Clostridium acetobutylicum).